The following is a 143-amino-acid chain: Large ribosomal subunit protein uL11 (143 aa).

The protein belongs to the universal ribosomal protein uL11 family. In terms of assembly, part of the ribosomal stalk of the 50S ribosomal subunit. Interacts with L10 and the large rRNA to form the base of the stalk. L10 forms an elongated spine to which L12 dimers bind in a sequential fashion forming a multimeric L10(L12)X complex. One or more lysine residues are methylated.

Functionally, forms part of the ribosomal stalk which helps the ribosome interact with GTP-bound translation factors. The sequence is that of Large ribosomal subunit protein uL11 from Psychrobacter cryohalolentis (strain ATCC BAA-1226 / DSM 17306 / VKM B-2378 / K5).